Here is a 486-residue protein sequence, read N- to C-terminus: Small ribosomal subunit protein uS4m (486 aa).

One can recognise an S4 RNA-binding domain in the interval lysine 103–leucine 172.

Belongs to the universal ribosomal protein uS4 family. As to quaternary structure, component of the mitochondrial small ribosomal subunit (mt-SSU). Mature yeast 74S mitochondrial ribosomes consist of a small (37S) and a large (54S) subunit. The 37S small subunit contains a 15S ribosomal RNA (15S mt-rRNA) and 34 different proteins. The 54S large subunit contains a 21S rRNA (21S mt-rRNA) and 46 different proteins. uS3m, uS4m and uS5m form the narrow entry site of the mRNA channel.

It localises to the mitochondrion. Functionally, component of the mitochondrial ribosome (mitoribosome), a dedicated translation machinery responsible for the synthesis of mitochondrial genome-encoded proteins, including at least some of the essential transmembrane subunits of the mitochondrial respiratory chain. The mitoribosomes are attached to the mitochondrial inner membrane and translation products are cotranslationally integrated into the membrane. This chain is Small ribosomal subunit protein uS4m (NAM9), found in Saccharomyces cerevisiae (strain ATCC 204508 / S288c) (Baker's yeast).